We begin with the raw amino-acid sequence, 764 residues long: PFL-like enzyme TdcE (764 aa).

In terms of domain architecture, PFL spans 7–629; it reads TSDKLYADAW…KTGNTPDGRR (623 aa). Residue Cys423 is the S-acetylcysteine intermediate of the active site. Catalysis depends on Cys424, which acts as the Cysteine radical intermediate. The segment at 622–645 is disordered; the sequence is GNTPDGRRAGTPFAPGANPMHGRD. The Glycine radical domain maps to 636–764; the sequence is PGANPMHGRD…VISRTFTQAL (129 aa). Gly739 is subject to Glycine radical.

It belongs to the glycyl radical enzyme (GRE) family. PFL subfamily.

It is found in the cytoplasm. The catalysed reaction is 2-oxobutanoate + CoA = propanoyl-CoA + formate. It carries out the reaction formate + acetyl-CoA = pyruvate + CoA. The protein operates within amino-acid degradation; L-threonine degradation via propanoate pathway; propanoate from L-threonine: step 2/4. Dependent on PFL-activase. Catalyzes the cleavage of 2-ketobutyrate to propionyl-CoA and formate. It can also use pyruvate as substrate. This Escherichia coli (strain K12) protein is PFL-like enzyme TdcE (tdcE).